The sequence spans 176 residues: NAD(P)H-quinone oxidoreductase subunit 6, chloroplastic (176 aa).

Transmembrane regions (helical) follow at residues 10 to 30 (FLLV…VLLT), 32 to 52 (PIFS…LYIL), 63 to 83 (LLIY…FMNG), 92 to 112 (LWTV…ISLI), and 152 to 172 (FFLP…GAIV).

It belongs to the complex I subunit 6 family. As to quaternary structure, NDH is composed of at least 16 different subunits, 5 of which are encoded in the nucleus.

The protein resides in the plastid. Its subcellular location is the chloroplast thylakoid membrane. The enzyme catalyses a plastoquinone + NADH + (n+1) H(+)(in) = a plastoquinol + NAD(+) + n H(+)(out). It catalyses the reaction a plastoquinone + NADPH + (n+1) H(+)(in) = a plastoquinol + NADP(+) + n H(+)(out). NDH shuttles electrons from NAD(P)H:plastoquinone, via FMN and iron-sulfur (Fe-S) centers, to quinones in the photosynthetic chain and possibly in a chloroplast respiratory chain. The immediate electron acceptor for the enzyme in this species is believed to be plastoquinone. Couples the redox reaction to proton translocation, and thus conserves the redox energy in a proton gradient. This Lotus japonicus (Lotus corniculatus var. japonicus) protein is NAD(P)H-quinone oxidoreductase subunit 6, chloroplastic (ndhG).